Reading from the N-terminus, the 706-residue chain is Maternal embryonic leucine zipper kinase (706 aa).

The region spanning 11–265 (YAVHDELGSG…VKKLLEHDWL (255 aa)) is the Protein kinase domain. ATP is bound by residues 17-25 (LGSGGFGKV) and K40. Catalysis depends on D132, which acts as the Proton acceptor. 3 disordered regions span residues 366-386 (LDKS…SSSD), 433-493 (FTGR…SRGP), and 506-555 (SVYT…IGSA). 2 stretches are compositionally biased toward polar residues: residues 447–461 (SVRS…SAAT) and 506–515 (SVYTTPNTRP). One can recognise a KA1 domain in the interval 656–705 (QETVHGWMTVELEIVRLQMFDKVGIRRKRLKGDAFMYKKVCEKILQMAKI).

The protein belongs to the protein kinase superfamily. CAMK Ser/Thr protein kinase family. SNF1 subfamily. May be phosphorylated at Thr-169 by par-4 and/or autophosphorylated which likely results in its activation. Phosphorylation is not required for co-localization with the centrosome.

It localises to the cytoplasm. Its subcellular location is the cytoskeleton. The protein resides in the microtubule organizing center. It is found in the centrosome. The catalysed reaction is L-seryl-[protein] + ATP = O-phospho-L-seryl-[protein] + ADP + H(+). It catalyses the reaction L-threonyl-[protein] + ATP = O-phospho-L-threonyl-[protein] + ADP + H(+). Serine/threonine-protein kinase involved in cell autonomous neuroblast asymmetric divisions that generate one precursor cell and one apoptotic cell by controlling spindle positioning, myosin distribution and the segregation of cell fate determinants. Plays a role in neural fate specification in several dopaminergic linages, acting in concert with ham-1. Involved in phosphorylation of multiple proteins associated with key developmental processes, including the cell cycle, apoptosis, endocytosis, and asymmetric cell division. Promotes cell shedding during embryogenesis, probably through the endocytosis-mediated removal of cell adhesion molecules such as hmp-1 from the cell surface. May act downstream of par-4/strd-1/mop-25 to regulate cell shedding. The chain is Maternal embryonic leucine zipper kinase from Caenorhabditis elegans.